A 423-amino-acid polypeptide reads, in one-letter code: uncharacterized protein (423 aa).

Mg(2+) is bound by residues Lys181, Asp183, and Glu184. Lys181 is subject to N6-carboxylysine.

It belongs to the RuBisCO large chain family. Type IV subfamily. It depends on Mg(2+) as a cofactor.

In terms of biological role, may be involved in sulfur metabolism and oxidative stress response. Does not show RuBisCO activity. This is an uncharacterized protein from Bordetella bronchiseptica (strain ATCC BAA-588 / NCTC 13252 / RB50) (Alcaligenes bronchisepticus).